The primary structure comprises 369 residues: MNEQSQAKSPDTLRAMVAGTLANFQHPTLKHNLTTLKALHHVAWMDDTLHVELVMPFVWNSAFEVLKEQCSADLLRITGAKAIDWKLSYNIATLKRVKNQPGINGVKNIIAVSSGKGGVGKSSTAVNLALALAAEGAKVGVLDADIYGPSIPTMLGAEDQRPTSPDGTHMAPIMSHGLATNSIGYLVTDDNAMVWRGPMASKALMQMLQETLWPDLDYLVLDMPPGTGDIQLTLAQNIPVTGAVVVTTPQDIALIDAKKGIVMFEKVEVPVLGIVENMSMHICSNCGHHEPIFGTGGAQKLAEKYHTQLLGQMPLHISLREDLDRGTPTVVSRPESEFTAIYRELADRVAAQLYWQGEVIPGEIAFRAV.

115-122 is a binding site for ATP; it reads GKGGVGKS.

This sequence belongs to the Mrp/NBP35 ATP-binding proteins family. Homodimer. Holo-ApbC forms a mixture of homodimers and homotetramers.

Functionally, binds and transfers iron-sulfur (Fe-S) clusters to target apoproteins. Can hydrolyze ATP. Both activities are required for function in vivo, but the ability to hydrolyze ATP is not necessary for Fe-S cluster transfer. The chain is Iron-sulfur cluster carrier protein from Salmonella typhimurium (strain LT2 / SGSC1412 / ATCC 700720).